The primary structure comprises 144 residues: High mobility group B protein 2 (144 aa).

Composition is skewed to basic and acidic residues over residues 1-12 (MKGAKSKTETRS) and 73-94 (AGDKWKSLSDSEKAPYVAKAEK). Disordered stretches follow at residues 1–42 (MKGA…KRPA), 57–94 (KKENPKNKSVATVGKAAGDKWKSLSDSEKAPYVAKAEK), and 106–144 (YNKKLEEGPKEDEESDKSVSEVNDEDDAEDGSEEEEDDD). Residues 38-107 (PKRPASAFFV…EYEKNIKAYN (70 aa)) constitute a DNA-binding region (HMG box). At serine 125 the chain carries Phosphoserine. Positions 127-144 (VNDEDDAEDGSEEEEDDD) are enriched in acidic residues.

Belongs to the HMGB family. In terms of tissue distribution, mostly expressed in cotyledons, hypocotyls, leaves, and flowers (excluding pedicels), also present in roots and stems.

The protein resides in the nucleus. The protein localises to the cytoplasm. Its subcellular location is the cytosol. Its function is as follows. Binds preferentially double-stranded DNA. Confers sensitivity to salt and drought stresses. The chain is High mobility group B protein 2 (HMGB2) from Arabidopsis thaliana (Mouse-ear cress).